The sequence spans 644 residues: MSLKMDNRDVAGKANRWFGMAQPKSGKMNMNILHQEELIAQKKREIEARMEQKARQSHVASPQPPHPGEVADAQNSCISNKFANDGSFLQQFLKLQKAQASTDSAPRAPPSSPAPSSLKRPLLLSKRTGLGLGSPMGPVKNYSHAKQLPVAHRPSVFQSPDDDDEEEDYEQWLEIKVSPPEGAETRRVIEKLARFVAEGGPELEKVAMEDYKDNPAFTFLHDKNSREFLYYRKKVAEIRKEAQKPQAATQKVSPPEDEEAKNLAEKLARFIADGGPEVETIALQNNRENQAFSFLYDPNSQGYRYYKQKLEEFRKAKAGSTGSLPAPVPNPSLRRKSAPEALSGAVPPITACPTPVAPAPAVNPTPSIPGKPTATATVKRKRKSRWGPEEDKVELPPAELAQKDTDASPSPLSVQDLKGLGYEKGKPVGLVGVTELSDAQKKQLKEQQEMQQMYDMIMQHKRAMQDMQLLWEKALQQHQHGYDSDEEVDSELGTWEHQLRRMEMDKTREWAEQLTQMGRGKHFIGDFLPPDELEKFMETFKALKEGREPDYSEYKEFKLTVENIGYQMLMKMGWKEGEGLGTEGQGIKNPVNKGATTIDGAGFGIDRPAELSKEDDEYEAFRKRMMLAYRFRPNPLNNPRRPYY.

Residues R44 to A54 show a composition bias toward basic and acidic residues. Disordered regions lie at residues R44–Q74 and A98–L122. A Phosphothreonine modification is found at T128. An SURP motif 1 repeat occupies V188 to Y230. Residue S253 is modified to Phosphoserine. The stretch at L263–Y306 is one SURP motif 2 repeat. Disordered regions lie at residues A316 to L342 and P360 to L412. S323 is subject to Phosphoserine. A compositionally biased stretch (pro residues) spans P360 to P369. Residues K379–R385 carry the Nuclear localization signal motif. Phosphoserine is present on residues S408, S410, S413, and S484. Residues V561–P608 enclose the G-patch domain.

In terms of assembly, component of the spliceosome.

Its subcellular location is the nucleus. Functionally, plays a role in pre-mRNA splicing. The chain is SURP and G-patch domain-containing protein 1 (Sugp1) from Rattus norvegicus (Rat).